Reading from the N-terminus, the 220-residue chain is LHFPL tetraspan subfamily member 1 protein (220 aa).

The N-terminal stretch at 1 to 20 (MRNSLTMVGTFWAFLSLVTA) is a signal peptide. The next 2 helical transmembrane spans lie at 86–106 (VVTG…VLGC) and 122–142 (AAQF…PLGW). A glycan (N-linked (GlcNAc...) asparagine) is linked at Asn153. Residues 165 to 185 (LGWAYYCAGGGAAAAMLICTW) form a helical membrane-spanning segment.

Belongs to the LHFP family. As to expression, widely expressed. Strongly expressed in vagina and ovary. Weakly expressed in spleen, kidney, thymus, testis, brain, lung, intestine and uterus.

Its subcellular location is the membrane. This Mus musculus (Mouse) protein is LHFPL tetraspan subfamily member 1 protein.